Here is a 419-residue protein sequence, read N- to C-terminus: DNA primase DnaG (419 aa).

Residues 174–260 (DAIIVVEGRS…EVEDLEKDEV (87 aa)) form the Toprim domain. 3 residues coordinate Mg(2+): glutamate 180, aspartate 222, and aspartate 224. Positions 277-314 (HNILSESDSKNSHKKHNGKHNNKHSNNKHQQHETKVKE) are disordered. Residues 288 to 305 (SHKKHNGKHNNKHSNNKH) are compositionally biased toward basic residues.

Belongs to the archaeal DnaG primase family. In terms of assembly, forms a ternary complex with MCM helicase and DNA. Component of the archaeal exosome complex. Mg(2+) is required as a cofactor.

The enzyme catalyses ssDNA + n NTP = ssDNA/pppN(pN)n-1 hybrid + (n-1) diphosphate.. Functionally, RNA polymerase that catalyzes the synthesis of short RNA molecules used as primers for DNA polymerase during DNA replication. Also part of the exosome, which is a complex involved in RNA degradation. Acts as a poly(A)-binding protein that enhances the interaction between heteromeric, adenine-rich transcripts and the exosome. The chain is DNA primase DnaG from Methanobrevibacter smithii (strain ATCC 35061 / DSM 861 / OCM 144 / PS).